A 191-amino-acid chain; its full sequence is Calcium and integrin-binding protein 1 (191 aa).

The N-myristoyl glycine moiety is linked to residue Gly2. 2 consecutive EF-hand domains span residues 103–138 and 148–183; these read TPDI…LTGE and EMKQ…SPDF. Ca(2+) is bound by residues Asp116, Asp118, Asp120, Thr122, Asp127, Asp161, Asp163, Asp165, Thr167, and Glu172.

In terms of assembly, monomer. Interacts with the heterodimeric integrin alpha-IIb/beta3 (ITGA2B-ITGB3). Interacts with ITGA2B (via cytoplasmic domain); the interaction is direct and calcium-dependent. Interacts with the protein kinases PLK2/SNK and PRKDC (via the region immediately upstream of the kinase domain). Interacts with PLK3; the interaction inhibits PLK3 kinase activity. Interacts with PSEN2. Interacts (via C-terminus) with F8. Interacts with NBR1 (via C-terminus). Interacts with FEZ1 (via C-terminus). Interacts with UBR5 (via C-terminus); the interaction is sensitive to DNA damage, and may target CIB1 for ubiquitin-mediated degradation. Interacts with IFI6; the interaction is direct. Interacts with BCL2. Interacts with ITPR3; the interaction occurs in a calcium dependent manner. Interacts with PTK2/FAK1. Interacts with MAP3K5; the interaction inhibits MAP3K5 activation by phosphorylation, and its subsequent interaction with TRAF2. Interacts (via C-terminal region) with STMN2 (via the N-terminal region); the interaction is direct, occurs in a calcium-dependent manner and attenuates the STMN2-induced neurite outgrowth inhibition. Interacts with SPHK1, the interaction occurs in a calcium-dependent manner. Interacts with ITGA2B (via C-terminal cytoplasmic tail); the interaction occurs upon platelet aggregation and is stabilized/increased in a calcium and magnesium-dependent manner. Interacts with PAK1 (via N-terminal region); the interaction is direct and occurs in a calcium-dependent manner. Interacts with RAC3 (via C-terminal region); the interaction induces their association with the cytoskeleton upon alpha-IIb/beta3 integrin-mediated adhesion. Interacts with ITGA5 and ITGAV. Interacts with MYO1C. Interacts with ITGA2B (via C-terminal cytoplasmic tail region). Interacts (via C-terminal region) with PPP3R1; the interaction increases upon cardiomyocytes hypertrophy. Interacts with CACNA1C; the interaction increases upon cardiomyocytes hypertrophy. Interacts with TAS1R2 (via C-terminus); this interaction is independent of the myristoylation state of CIB1. Interacts and forms a complex with TMC6 and TMC8; the interaction stabilizes each component of the complex.

It localises to the membrane. The protein resides in the cell membrane. It is found in the sarcolemma. The protein localises to the apical cell membrane. Its subcellular location is the cell projection. It localises to the ruffle membrane. The protein resides in the filopodium tip. It is found in the growth cone. The protein localises to the lamellipodium. Its subcellular location is the cytoplasm. It localises to the cytoskeleton. The protein resides in the microtubule organizing center. It is found in the centrosome. The protein localises to the perinuclear region. Its subcellular location is the nucleus. It localises to the neuron projection. The protein resides in the perikaryon. Its function is as follows. Calcium-binding protein that plays a role in the regulation of numerous cellular processes, such as cell differentiation, cell division, cell proliferation, cell migration, thrombosis, angiogenesis, cardiac hypertrophy and apoptosis. Involved in bone marrow megakaryocyte differentiation by negatively regulating thrombopoietin-mediated signaling pathway. Participates in the endomitotic cell cycle of megakaryocyte, a form of mitosis in which both karyokinesis and cytokinesis are interrupted. Plays a role in integrin signaling by negatively regulating alpha-IIb/beta3 activation in thrombin-stimulated megakaryocytes preventing platelet aggregation. Up-regulates PTK2/FAK1 activity, and is also needed for the recruitment of PTK2/FAK1 to focal adhesions; it thus appears to play an important role in focal adhesion formation. Positively regulates cell migration on fibronectin in a CDC42-dependent manner, the effect being negatively regulated by PAK1. Functions as a negative regulator of stress activated MAP kinase (MAPK) signaling pathways. Down-regulates inositol 1,4,5-trisphosphate receptor-dependent calcium signaling. Involved in sphingosine kinase SPHK1 translocation to the plasma membrane in a N-myristoylation-dependent manner preventing TNF-alpha-induced apoptosis. Regulates serine/threonine-protein kinase PLK3 activity for proper completion of cell division progression. Plays a role in microtubule (MT) dynamics during neuronal development; disrupts the MT depolymerization activity of STMN2 attenuating NGF-induced neurite outgrowth and the MT reorganization at the edge of lamellipodia. Promotes cardiomyocyte hypertrophy via activation of the calcineurin/NFAT signaling pathway. Stimulates calcineurin PPP3R1 activity by mediating its anchoring to the sarcolemma. In ischemia-induced (pathological or adaptive) angiogenesis, stimulates endothelial cell proliferation, migration and microvessel formation by activating the PAK1 and ERK1/ERK2 signaling pathway. Also promotes cancer cell survival and proliferation. May regulate cell cycle and differentiation of spermatogenic germ cells, and/or differentiation of supporting Sertoli cells. Forms a complex with TMC6/EVER1 and TMC8/EVER2 in lymphocytes and keratynocytes where CIB1 stabilizes TMC6 and TMC8 levels and reciprocally. This Bos taurus (Bovine) protein is Calcium and integrin-binding protein 1 (CIB1).